Consider the following 37-residue polypeptide: MVEALLSGIVLGLVPVTIAGLFVTAYLQYRRGDQLNI.

A helical membrane pass occupies residues 5-25 (LLSGIVLGLVPVTIAGLFVTA).

The protein belongs to the PetG family. In terms of assembly, the 4 large subunits of the cytochrome b6-f complex are cytochrome b6, subunit IV (17 kDa polypeptide, PetD), cytochrome f and the Rieske protein, while the 4 small subunits are PetG, PetL, PetM and PetN. The complex functions as a dimer.

It is found in the plastid. The protein localises to the chloroplast thylakoid membrane. Its function is as follows. Component of the cytochrome b6-f complex, which mediates electron transfer between photosystem II (PSII) and photosystem I (PSI), cyclic electron flow around PSI, and state transitions. PetG is required for either the stability or assembly of the cytochrome b6-f complex. This is Cytochrome b6-f complex subunit 5 from Chlorella vulgaris (Green alga).